A 630-amino-acid polypeptide reads, in one-letter code: tRNA uridine 5-carboxymethylaminomethyl modification enzyme MnmG (630 aa).

13–18 (GGGHAG) lines the FAD pocket. 273 to 287 (GPRYCPSIEDKIHRF) is an NAD(+) binding site.

The protein belongs to the MnmG family. In terms of assembly, homodimer. Heterotetramer of two MnmE and two MnmG subunits. The cofactor is FAD.

The protein localises to the cytoplasm. NAD-binding protein involved in the addition of a carboxymethylaminomethyl (cmnm) group at the wobble position (U34) of certain tRNAs, forming tRNA-cmnm(5)s(2)U34. The chain is tRNA uridine 5-carboxymethylaminomethyl modification enzyme MnmG from Pseudomonas putida (strain ATCC 700007 / DSM 6899 / JCM 31910 / BCRC 17059 / LMG 24140 / F1).